Here is a 385-residue protein sequence, read N- to C-terminus: 3,5,7-trioxododecanoyl-CoA synthase (385 aa).

The active site involves cysteine 157.

Belongs to the thiolase-like superfamily. Chalcone/stilbene synthases family. In terms of tissue distribution, expressed in bracts, flowers and young leaves. Not detected in mature leaves, roots and stems. Expressed in glandular trichomes.

The catalysed reaction is hexanoyl-CoA + 3 malonyl-CoA + 3 H(+) = 3,5,7-trioxododecanoyl-CoA + 3 CO2 + 3 CoA. It carries out the reaction 3,5,7-trioxododecanoyl-CoA = olivetol + CO2 + CoA. The protein operates within secondary metabolite biosynthesis; terpenoid biosynthesis. Its function is as follows. Involved in the biosynthesis of cannabinoids-related terpenophenolic natural products, which have pharmacological activity. Polyketide synthase responsible for olivetol biosynthesis, from a C(12)-polyketide, probably 3,5,7-trioxododecanoyl-CoA. Catalyzes the first step in the cannabinoids biosynthetic pathway. The preferred substrate is hexanoyl-CoA, but also accepts CoA esters with C4 to C8 aliphatic side chains. When using malonyl-CoA and hexanoyl-CoA as substrates, produces undetermined compounds distinct form olivetol or olivetolic acid that could be hexanoyl triacetic acid lactone (HTAL) and pentyl diacetic acid lactone (PDAL). Produces olivetolic acid when acting in concert with olivetolic acid cyclase (OAC). The polypeptide is 3,5,7-trioxododecanoyl-CoA synthase (Cannabis sativa (Hemp)).